A 137-amino-acid polypeptide reads, in one-letter code: Cytochrome c-type biogenesis protein CcmE (137 aa).

Over 1 to 8 the chain is Cytoplasmic; it reads MQKGAKNR. A helical; Signal-anchor for type II membrane protein membrane pass occupies residues 9-29; sequence LITIIICFCSAVIGVSIILYN. Residues 30 to 137 lie on the Periplasmic side of the membrane; the sequence is LEKSIVFFVP…NTVIPAKAGI (108 aa). 2 residues coordinate heme: His-120 and Tyr-124.

Belongs to the CcmE/CycJ family.

It is found in the cell inner membrane. Heme chaperone required for the biogenesis of c-type cytochromes. Transiently binds heme delivered by CcmC and transfers the heme to apo-cytochromes in a process facilitated by CcmF and CcmH. In Rickettsia bellii (strain OSU 85-389), this protein is Cytochrome c-type biogenesis protein CcmE.